A 353-amino-acid polypeptide reads, in one-letter code: MDVLRRTIERIGPLDQAAMRAARERQDDLTKPRGSLGRLEDLGVLVSGITGQVKTRLDRKTVFVIAADHGVAEEGTSLYPQEVTTQMMFNFERGGAGINVLARQVGARVVVVDVGTKSDTGGVGNLISKKIAAGSKNMAVGPAMSRAEAVAAVQAGIEVLEAELPRGVDIAATGDMGIGNTTPSSAICSVLTGKPVEEVTGRGTGLDDAGLAKKCAVIRRALAVNRPDPADPLDVLAKVGGFEIGALAGVILAAAAHRIPIVIDGFVSGAAALIAVGLAPQVRDYMIAGHLSAEPGHAVLLAHLGLDPLLCLGMRLGEGTGACLGMSLVAAAAAIQAEMATFQDAGVSQAKND.

E318 functions as the Proton acceptor in the catalytic mechanism.

Belongs to the CobT family.

It catalyses the reaction 5,6-dimethylbenzimidazole + nicotinate beta-D-ribonucleotide = alpha-ribazole 5'-phosphate + nicotinate + H(+). The protein operates within nucleoside biosynthesis; alpha-ribazole biosynthesis; alpha-ribazole from 5,6-dimethylbenzimidazole: step 1/2. Its function is as follows. Catalyzes the synthesis of alpha-ribazole-5'-phosphate from nicotinate mononucleotide (NAMN) and 5,6-dimethylbenzimidazole (DMB). This is Nicotinate-nucleotide--dimethylbenzimidazole phosphoribosyltransferase from Desulforudis audaxviator (strain MP104C).